Reading from the N-terminus, the 513-residue chain is Probable cytosol aminopeptidase (513 aa).

The Mn(2+) site is built by Lys-277 and Asp-282. The active site involves Lys-289. Positions 300, 359, and 361 each coordinate Mn(2+). Arg-363 is an active-site residue.

Belongs to the peptidase M17 family. Requires Mn(2+) as cofactor.

The protein localises to the cytoplasm. It carries out the reaction Release of an N-terminal amino acid, Xaa-|-Yaa-, in which Xaa is preferably Leu, but may be other amino acids including Pro although not Arg or Lys, and Yaa may be Pro. Amino acid amides and methyl esters are also readily hydrolyzed, but rates on arylamides are exceedingly low.. The enzyme catalyses Release of an N-terminal amino acid, preferentially leucine, but not glutamic or aspartic acids.. Its function is as follows. Presumably involved in the processing and regular turnover of intracellular proteins. Catalyzes the removal of unsubstituted N-terminal amino acids from various peptides. This Mycobacterium sp. (strain JLS) protein is Probable cytosol aminopeptidase.